Consider the following 498-residue polypeptide: Glycerol kinase (498 aa).

Thr12 is an ADP binding site. ATP is bound by residues Thr12, Thr13, and Ser14. Thr12 lines the sn-glycerol 3-phosphate pocket. Arg16 contributes to the ADP binding site. Sn-glycerol 3-phosphate contacts are provided by Arg82, Glu83, Tyr134, and Asp241. Glycerol contacts are provided by Arg82, Glu83, Tyr134, Asp241, and Gln242. ADP contacts are provided by Thr263 and Gly310. Residues Thr263, Gly310, Gln314, and Gly411 each contribute to the ATP site. ADP contacts are provided by Gly411 and Asn415.

Belongs to the FGGY kinase family.

It carries out the reaction glycerol + ATP = sn-glycerol 3-phosphate + ADP + H(+). Its pathway is polyol metabolism; glycerol degradation via glycerol kinase pathway; sn-glycerol 3-phosphate from glycerol: step 1/1. Inhibited by fructose 1,6-bisphosphate (FBP). Its function is as follows. Key enzyme in the regulation of glycerol uptake and metabolism. Catalyzes the phosphorylation of glycerol to yield sn-glycerol 3-phosphate. The chain is Glycerol kinase from Herminiimonas arsenicoxydans.